The chain runs to 137 residues: MRILGLDIGSKTIGVAVSDPLGWTAQGVTTIKRDCYTKDVEAVMKICKEYGVETIVAGMPKNMNGTIGPSGEMVKNLCEQIEKSFDGKIEFWDERLTTVAAHRAMLEADLSRAKRKKIVDKIAATYILQGYLDRISK.

The protein belongs to the YqgF nuclease family.

Its subcellular location is the cytoplasm. Functionally, could be a nuclease involved in processing of the 5'-end of pre-16S rRNA. The protein is Putative pre-16S rRNA nuclease of Clostridium perfringens (strain ATCC 13124 / DSM 756 / JCM 1290 / NCIMB 6125 / NCTC 8237 / Type A).